A 664-amino-acid polypeptide reads, in one-letter code: Protein LYK5 (664 aa).

A signal peptide spans 1–26 (MAACTLHALSVTLFLLLFFAVSPAKA). Topologically, residues 27–277 (QQPYVNNHQL…DPPGSSSSHK (251 aa)) are extracellular. Residues Asn-45, Asn-81, Asn-111, Asn-125, and Asn-129 are each glycosylated (N-linked (GlcNAc...) asparagine). Disulfide bonds link Cys-52/Cys-114, Cys-58/Cys-181, and Cys-112/Cys-179. 135-141 (GDETYFS) serves as a coordination point for chitin. N-linked (GlcNAc...) asparagine glycosylation occurs at Asn-144. 164 to 170 (ERQLTPG) lines the chitin pocket. Residues 195-238 (LTYLVAMGDSISGIAEMFNSTSAAITEGNELTSDNIFFFTPVLV) form the LysM domain. N-linked (GlcNAc...) asparagine glycosylation is present at Asn-213. Over residues 251–269 (PSPPPPPVVATPPQTPVDP) the composition is skewed to pro residues. The interval 251–270 (PSPPPPPVVATPPQTPVDPP) is disordered. Residues 278–298 (WIYIGIGIGAGLLLLLSILAL) traverse the membrane as a helical segment. The Cytoplasmic segment spans residues 299-664 (CFYKRRSKKK…DLLRSGSLGN (366 aa)). The 293-residue stretch at 351–643 (KSAIESLTLY…TQVLTTLSMI (293 aa)) folds into the Protein kinase domain. Residues 357–365 (LTLYRFNDL) and Lys-395 contribute to the ATP site.

Belongs to the protein kinase superfamily. Ser/Thr protein kinase family.

It is found in the cell membrane. Functionally, may recognize microbe-derived N-acetylglucosamine (NAG)-containing ligands. This is Protein LYK5 (LYK5) from Arabidopsis thaliana (Mouse-ear cress).